Reading from the N-terminus, the 206-residue chain is Small ribosomal subunit protein uS7 (206 aa).

The span at 1 to 19 shows a compositional bias: acidic residues; sequence MSAEDTPEADADAAEESEP. Positions 1–25 are disordered; it reads MSAEDTPEADADAAEESEPETARAK. Ser-2 carries the post-translational modification N-acetylserine.

Belongs to the universal ribosomal protein uS7 family. As to quaternary structure, part of the 30S ribosomal subunit.

Its function is as follows. One of the primary rRNA binding proteins, it binds directly to 16S rRNA where it nucleates assembly of the head domain of the 30S subunit. Is located at the subunit interface close to the decoding center. The protein is Small ribosomal subunit protein uS7 of Haloarcula marismortui (strain ATCC 43049 / DSM 3752 / JCM 8966 / VKM B-1809) (Halobacterium marismortui).